Consider the following 417-residue polypeptide: MSGTSSIARSTMAYVLAGGRGSRLLELTDTRAKPAVYFGGKSRIIDFALSNAVNSGIRRIGVATQYKAHSLIRHMQRGWNFFRPERNEGFDILPASQRVSETQWYEGTADAVYQNLDIIAGYEPEYMIILAGDHIYKMDYEIMLHQHVERQADVTVGCIEVPREEATGFGVMQVDDTGRITAFLEKPSDPPGMPGQPDIALASMGIYVFKTKFLFDVLRRDAADPDSKHDFGGDIIPDLVENGTAIAHRFSDSCVRSSKTAEAYWRDVGTLDSYWQANLDLTNVVPTLDLYDSGWPIWTYNEISPPAKFVYDDVGRRGMAVDSLVAGGCIVSGASLSRSLISTGCRVHSFSQLHGTVVLPYADIARSARLRNTVVDRGVRIPEGLVVGEDPELDAKRFRRTEKGICLITQPMIDRLG.

Alpha-D-glucose 1-phosphate is bound by residues Tyr105, Gly170, 185 to 186 (EK), and Ser203.

It belongs to the bacterial/plant glucose-1-phosphate adenylyltransferase family. Homotetramer.

The enzyme catalyses alpha-D-glucose 1-phosphate + ATP + H(+) = ADP-alpha-D-glucose + diphosphate. It participates in glycan biosynthesis; glycogen biosynthesis. Its function is as follows. Involved in the biosynthesis of ADP-glucose, a building block required for the elongation reactions to produce glycogen. Catalyzes the reaction between ATP and alpha-D-glucose 1-phosphate (G1P) to produce pyrophosphate and ADP-Glc. The polypeptide is Glucose-1-phosphate adenylyltransferase (Granulibacter bethesdensis (strain ATCC BAA-1260 / CGDNIH1)).